We begin with the raw amino-acid sequence, 407 residues long: Phosphoglycerate kinase (407 aa).

Residues 24–26, arginine 39, 60–63, arginine 117, and arginine 157 each bind substrate; these read DIN and HQSR. ATP contacts are provided by residues glutamate 330 and 355-358; that span reads GGHI.

It belongs to the phosphoglycerate kinase family.

Its subcellular location is the cytoplasm. The enzyme catalyses (2R)-3-phosphoglycerate + ATP = (2R)-3-phospho-glyceroyl phosphate + ADP. Its pathway is carbohydrate degradation; glycolysis; pyruvate from D-glyceraldehyde 3-phosphate: step 2/5. This Archaeoglobus fulgidus (strain ATCC 49558 / DSM 4304 / JCM 9628 / NBRC 100126 / VC-16) protein is Phosphoglycerate kinase (pgk).